The chain runs to 136 residues: Psoriasis susceptibility 1 candidate gene 2 protein (136 aa).

Positions 1–22 are cleaved as a signal peptide; the sequence is MILNWKLLGILVLCLHTRGISG. The tract at residues 20 to 136 is disordered; that stretch reads ISGSEGHPSH…DLDPPREEYR (117 aa). Composition is skewed to pro residues over residues 44–69 and 84–116; these read PQGP…PTRP and PEPP…PPAP. The span at 118–136 shows a compositional bias: basic and acidic residues; sequence VDNRPQEEPDLDPPREEYR.

In terms of tissue distribution, expressed in skin. Also expressed in heart and skeletal muscle.

The protein localises to the secreted. This is Psoriasis susceptibility 1 candidate gene 2 protein (PSORS1C2) from Homo sapiens (Human).